Reading from the N-terminus, the 156-residue chain is Ribosomal RNA large subunit methyltransferase H (156 aa).

S-adenosyl-L-methionine contacts are provided by residues Leu-73, Gly-104, and 123–128 (LSALTL).

It belongs to the RNA methyltransferase RlmH family. As to quaternary structure, homodimer.

The protein localises to the cytoplasm. The catalysed reaction is pseudouridine(1915) in 23S rRNA + S-adenosyl-L-methionine = N(3)-methylpseudouridine(1915) in 23S rRNA + S-adenosyl-L-homocysteine + H(+). In terms of biological role, specifically methylates the pseudouridine at position 1915 (m3Psi1915) in 23S rRNA. In Shewanella baltica (strain OS223), this protein is Ribosomal RNA large subunit methyltransferase H.